The sequence spans 104 residues: L-rhamnose mutarotase (104 aa).

Residue Tyr-18 participates in substrate binding. His-22 serves as the catalytic Proton donor. Residues Tyr-41 and 76–77 each bind substrate; that span reads WW.

This sequence belongs to the rhamnose mutarotase family. Homodimer.

The protein resides in the cytoplasm. It carries out the reaction alpha-L-rhamnose = beta-L-rhamnose. It functions in the pathway carbohydrate metabolism; L-rhamnose metabolism. Functionally, involved in the anomeric conversion of L-rhamnose. The protein is L-rhamnose mutarotase of Lactiplantibacillus plantarum (strain ATCC BAA-793 / NCIMB 8826 / WCFS1) (Lactobacillus plantarum).